Here is an 859-residue protein sequence, read N- to C-terminus: Rod cGMP-specific 3',5'-cyclic phosphodiesterase subunit alpha (859 aa).

An N-acetylglycine modification is found at Gly2. GAF domains are found at residues 73 to 222 (QAEK…NLIM) and 254 to 431 (DIER…GWSV). Residues 483-816 (EEEELAEILQ…KEWKALADEY (334 aa)) enclose the PDEase domain. The active-site Proton donor is His559. A divalent metal cation is bound by residues His563, His599, Asp600, and Asp720. The tract at residues 823-859 (LEEEKQKQQAAKQAASGNQPGGNPLQGAPASKSCCIQ) is disordered. Cys856 carries the post-translational modification Cysteine methyl ester. A lipid anchor (S-farnesyl cysteine) is attached at Cys856. A propeptide spans 857–859 (CIQ) (removed in mature form).

This sequence belongs to the cyclic nucleotide phosphodiesterase family. Oligomer composed of two catalytic chains (alpha and beta), an inhibitory chain (gamma) and the delta chain. A divalent metal cation is required as a cofactor.

The protein resides in the cell membrane. Its subcellular location is the cell projection. It is found in the cilium. It localises to the photoreceptor outer segment. The enzyme catalyses 3',5'-cyclic GMP + H2O = GMP + H(+). Functionally, rod-specific cGMP phosphodiesterase that catalyzes the hydrolysis of 3',5'-cyclic GMP. This protein participates in processes of transmission and amplification of the visual signal. In Mus musculus (Mouse), this protein is Rod cGMP-specific 3',5'-cyclic phosphodiesterase subunit alpha.